Here is a 135-residue protein sequence, read N- to C-terminus: Small ribosomal subunit protein eS6 (135 aa).

It belongs to the eukaryotic ribosomal protein eS6 family.

The protein is Small ribosomal subunit protein eS6 of Halorubrum lacusprofundi (strain ATCC 49239 / DSM 5036 / JCM 8891 / ACAM 34).